We begin with the raw amino-acid sequence, 394 residues long: Elongation factor Tu (394 aa).

The tr-type G domain maps to 10–204; the sequence is KTHLNVGTIG…TLDTYIEDPV (195 aa). Residues 19 to 26 are G1; that stretch reads GHVDHGKT. 19–26 contributes to the GTP binding site; that stretch reads GHVDHGKT. Residue Thr-26 participates in Mg(2+) binding. A G2 region spans residues 60–64; the sequence is GITIK. Residues 81–84 form a G3 region; the sequence is DCPG. Residues 81-85 and 136-139 contribute to the GTP site; these read DCPGH and NKCD. A G4 region spans residues 136-139; sequence NKCD. Residues 174–176 are G5; it reads SAL.

The protein belongs to the TRAFAC class translation factor GTPase superfamily. Classic translation factor GTPase family. EF-Tu/EF-1A subfamily. Monomer.

It is found in the cytoplasm. The enzyme catalyses GTP + H2O = GDP + phosphate + H(+). In terms of biological role, GTP hydrolase that promotes the GTP-dependent binding of aminoacyl-tRNA to the A-site of ribosomes during protein biosynthesis. The chain is Elongation factor Tu from Aster yellows witches'-broom phytoplasma (strain AYWB).